Consider the following 410-residue polypeptide: Platelet-activating factor acetylhydrolase IB subunit beta (410 aa).

The interval methionine 1 to aspartate 38 is required for self-association and interaction with PAFAH1B2 and PAFAH1B3. The interval methionine 1–methionine 66 is interaction with NDE1. The tract at residues methionine 1–tyrosine 102 is interaction with NDEL1. In terms of domain architecture, LisH spans glutamine 7–methionine 39. An N6-acetyllysine modification is found at lysine 53. Positions threonine 56–glycine 82 form a coiled coil. Positions glycine 83–arginine 410 are interaction with dynein and dynactin. WD repeat units lie at residues glycine 106–lysine 147, glycine 148–threonine 187, glycine 190–threonine 229, glycine 232–glutamate 271, glutamate 274–threonine 333, glycine 336–asparagine 377, and alanine 378–arginine 410. The residue at position 109 (serine 109) is a Phosphoserine. Residues tyrosine 367–cysteine 409 form an interaction with DCX region. An interaction with NDEL1 region spans residues phenylalanine 388 to arginine 410.

Belongs to the WD repeat LIS1/nudF family. As to quaternary structure, can self-associate. Component of the cytosolic PAF-AH (I) heterotetrameric enzyme, which is composed of PAFAH1B1 (beta), PAFAH1B2 (alpha2) and PAFAH1B3 (alpha1) subunits. The catalytic activity of the enzyme resides in the alpha1 (PAFAH1B3) and alpha2 (PAFAH1B2) subunits, whereas the beta subunit (PAFAH1B1) has regulatory activity. Trimer formation is not essential for the catalytic activity. Interacts with the catalytic dimer of PAF-AH (I) heterotetrameric enzyme: interacts with PAFAH1B2 homodimer (alpha2/alpha2 homodimer), PAFAH1B3 homodimer (alpha1/alpha1 homodimer) and PAFAH1B2-PAFAH1B3 heterodimer (alpha2/alpha1 heterodimer). Interacts with DCX, dynein, dynactin, IQGAP1, KATNB1, NDE1, NDEL1, NUDC and RSN. Interacts with DISC1, and this interaction is enhanced by NDEL1. Interacts with DAB1 when DAB1 is phosphorylated in response to RELN/reelin signaling. Interacts with INTS13. Interacts with DCDC1.

Its subcellular location is the cytoplasm. The protein resides in the cytoskeleton. The protein localises to the microtubule organizing center. It is found in the centrosome. It localises to the spindle. Its subcellular location is the nucleus membrane. Regulatory subunit (beta subunit) of the cytosolic type I platelet-activating factor (PAF) acetylhydrolase (PAF-AH (I)), an enzyme that catalyzes the hydrolyze of the acetyl group at the sn-2 position of PAF and its analogs and participates in PAF inactivation. Regulates the PAF-AH (I) activity in a catalytic dimer composition-dependent manner. Positively regulates the activity of the minus-end directed microtubule motor protein dynein. May enhance dynein-mediated microtubule sliding by targeting dynein to the microtubule plus end. Required for several dynein- and microtubule-dependent processes such as the maintenance of Golgi integrity, the peripheral transport of microtubule fragments and the coupling of the nucleus and centrosome. Required during brain development for the proliferation of neuronal precursors and the migration of newly formed neurons from the ventricular/subventricular zone toward the cortical plate. Neuronal migration involves a process called nucleokinesis, whereby migrating cells extend an anterior process into which the nucleus subsequently translocates. During nucleokinesis dynein at the nuclear surface may translocate the nucleus towards the centrosome by exerting force on centrosomal microtubules. Also required for proper activation of Rho GTPases and actin polymerization at the leading edge of locomoting cerebellar neurons and postmigratory hippocampal neurons in response to calcium influx triggered via NMDA receptors. May also play a role in other forms of cell locomotion including the migration of fibroblasts during wound healing. Required for dynein recruitment to microtubule plus ends and BICD2-bound cargos. May modulate the Reelin pathway through interaction of the PAF-AH (I) catalytic dimer with VLDLR. This chain is Platelet-activating factor acetylhydrolase IB subunit beta, found in Felis catus (Cat).